The primary structure comprises 333 residues: Terpene synthase 2 (333 aa).

The DDxx(x)D/E motif motif lies at 82–87; sequence DDDLDT. The short motif at 219 to 227 is the NDxxSxxxD/E motif element; sequence NDCVSYAKE.

The protein belongs to the terpene synthase family.

The catalysed reaction is (2E,6E)-farnesyl diphosphate = (E)-beta-farnesene + diphosphate. It carries out the reaction (2E,6E)-farnesyl diphosphate = (1S,2S,4R)-beta-elemene + diphosphate. In terms of biological role, terpene synthase that converts its substrate farnesyl diphosphate (FPP) into the sesquiterpene (E)-beta-farnesene as major product. Is also able to convert FPP into delta-elemene, beta-elemene, (E)-beta-caryophyllene, 9-epi-(E)-caryophyllene, and a yet unidentified sesquiterpene. This is Terpene synthase 2 from Dictyostelium purpureum (Slime mold).